Here is a 368-residue protein sequence, read N- to C-terminus: Probable ubiquitin receptor RAD23a (368 aa).

Residues 1–77 form the Ubiquitin-like domain; the sequence is MKLTVKTLKG…GFLVVMLSKS (77 aa). Positions 80–111 are enriched in low complexity; sequence ASSAGPSSTQPTSTTTSTISSTTLAAPSTTQS. The segment at 80-136 is disordered; it reads ASSAGPSSTQPTSTTTSTISSTTLAAPSTTQSIAVPASNSTPVQEQPTAQSDTYGQA. Residues 116-136 show a composition bias toward polar residues; that stretch reads ASNSTPVQEQPTAQSDTYGQA. The region spanning 142-185 is the UBA 1 domain; it reads SGSSIEQMVQQIMEMGGGSWDKETVTRALRAAYNNPERAVDYLY. The tract at residues 202-222 is disordered; the sequence is VGSGRELTAPPPSGGPNSSPL. In terms of domain architecture, STI1 spans 239 to 282; that stretch reads GTLEFLRGNDQFQQLRSMVNSNPQILQPMLQELGKQNPQLLRLI. The 41-residue stretch at 320–360 folds into the UBA 2 domain; sequence VTPEEQESIERLEAMGFDRAIVIEAFLSCDRNEELAANYLL.

Belongs to the RAD23 family. In terms of assembly, interacts with 'Lys-48'-linked polyubiquitin chains. Interacts with RPN10. Widely expressed in the whole plant.

The protein localises to the nucleus. The protein resides in the cytoplasm. In terms of biological role, may be involved in nucleotide excision repair. Binds and presumably selects ubiquitin-conjugates for destruction. Prefers multiubiquitin chains rather than single ubiquitins, with a binding affinity for 'Lys-48'-linked ubiquitin chains. Acts as a ubiquitin receptor that associates with the 26S proteasomal docking subunit RPN10 for the indirect recognition of ubiquitinated substrates of ubiquitin/26S proteasome-mediated proteolysis (UPP). Involved in UV tolerance in roots, specifically in dark conditions. The polypeptide is Probable ubiquitin receptor RAD23a (Arabidopsis thaliana (Mouse-ear cress)).